The sequence spans 525 residues: GMP synthase [glutamine-hydrolyzing] (525 aa).

Residues 9 to 207 (RILILDFGSQ…VLDICGCDAL (199 aa)) form the Glutamine amidotransferase type-1 domain. The active-site Nucleophile is Cys-86. Active-site residues include His-181 and Glu-183. The GMPS ATP-PPase domain maps to 208-400 (WTSAAIIEDT…LGLPYDMLYR (193 aa)). Residue 235–241 (SGGVDSS) coordinates ATP.

In terms of assembly, homodimer.

The enzyme catalyses XMP + L-glutamine + ATP + H2O = GMP + L-glutamate + AMP + diphosphate + 2 H(+). It participates in purine metabolism; GMP biosynthesis; GMP from XMP (L-Gln route): step 1/1. Functionally, catalyzes the synthesis of GMP from XMP. The polypeptide is GMP synthase [glutamine-hydrolyzing] (Proteus mirabilis (strain HI4320)).